A 490-amino-acid polypeptide reads, in one-letter code: Aspartyl/glutamyl-tRNA(Asn/Gln) amidotransferase subunit B (490 aa).

The protein belongs to the GatB/GatE family. GatB subfamily. In terms of assembly, heterotrimer of A, B and C subunits.

It catalyses the reaction L-glutamyl-tRNA(Gln) + L-glutamine + ATP + H2O = L-glutaminyl-tRNA(Gln) + L-glutamate + ADP + phosphate + H(+). The enzyme catalyses L-aspartyl-tRNA(Asn) + L-glutamine + ATP + H2O = L-asparaginyl-tRNA(Asn) + L-glutamate + ADP + phosphate + 2 H(+). Allows the formation of correctly charged Asn-tRNA(Asn) or Gln-tRNA(Gln) through the transamidation of misacylated Asp-tRNA(Asn) or Glu-tRNA(Gln) in organisms which lack either or both of asparaginyl-tRNA or glutaminyl-tRNA synthetases. The reaction takes place in the presence of glutamine and ATP through an activated phospho-Asp-tRNA(Asn) or phospho-Glu-tRNA(Gln). The chain is Aspartyl/glutamyl-tRNA(Asn/Gln) amidotransferase subunit B from Methylobacterium radiotolerans (strain ATCC 27329 / DSM 1819 / JCM 2831 / NBRC 15690 / NCIMB 10815 / 0-1).